The primary structure comprises 171 residues: MATTDSSTDSADEGPSPKSSYCDTTETKSSFLEPPLPATICGLANLLEIPLDDCLIPCNFCGNFLTHLEVCEFDQKKLSLIWKGHCVFACCRVCCTATATYEFNEFYESTVEGREIESVTGKSIFNVDVRCYTCMRFLDSIEKLDICGRKLPFHKVRGSWKGICRLCKHFQ.

The disordered stretch occupies residues 1 to 28 (MATTDSSTDSADEGPSPKSSYCDTTETK). Residues 17–28 (PKSSYCDTTETK) show a composition bias toward polar residues. 2 zinc fingers span residues 58–94 (CNFCGNFLTHLEVCEFDQKKLSLIWKGHCVFACCRVC) and 131–167 (CYTCMRFLDSIEKLDICGRKLPFHKVRGSWKGICRLC).

The protein belongs to the papillomaviridae E6 protein family. In terms of assembly, forms homodimers. Interacts with ubiquitin-protein ligase UBE3A/E6-AP; this interaction stimulates UBE3A ubiquitin activity. Interacts with host BAK1.

It is found in the host cytoplasm. Its subcellular location is the host nucleus. Its function is as follows. Plays a major role in the induction and maintenance of cellular transformation. E6 associates with host UBE3A/E6-AP ubiquitin-protein ligase and modulates its activity. Protects host keratinocytes from apoptosis by mediating the degradation of host BAK1. May also inhibit host immune response. The chain is Protein E6 from Human papillomavirus 14.